A 176-amino-acid chain; its full sequence is Urease accessory protein UreE (176 aa).

The tract at residues phenylalanine 134 to glutamine 176 is disordered. A compositionally biased stretch (basic and acidic residues) spans histidine 161–glutamine 176.

The protein belongs to the UreE family.

It is found in the cytoplasm. Functionally, involved in urease metallocenter assembly. Binds nickel. Probably functions as a nickel donor during metallocenter assembly. This Ruegeria sp. (strain TM1040) (Silicibacter sp.) protein is Urease accessory protein UreE.